Here is a 115-residue protein sequence, read N- to C-terminus: Dolichyl-diphosphooligosaccharide--protein glycosyltransferase subunit DAD2 (115 aa).

Over 1-31 (MVKSTSKDAQDLFHSLHSAYTATPTNLKIID) the chain is Cytoplasmic. The helical transmembrane segment at 32-52 (LYVCFAVFTALIQVAYMALVG) threads the bilayer. Residues 53-55 (SFP) are Lumenal-facing. A helical membrane pass occupies residues 56 to 76 (FNSFLSGVLSCIGTAVLAVCL). The Cytoplasmic segment spans residues 77 to 94 (RIQVNKENKEFKDLAPER). A helical transmembrane segment spans residues 95-115 (AFADFVLCNLVLHLVIINFLG).

It belongs to the DAD/OST2 family. Component of the oligosaccharyltransferase (OST) complex.

The protein resides in the endoplasmic reticulum membrane. It functions in the pathway protein modification; protein glycosylation. Functionally, subunit of the oligosaccharyl transferase (OST) complex that catalyzes the initial transfer of a defined glycan (Glc(3)Man(9)GlcNAc(2) in eukaryotes) from the lipid carrier dolichol-pyrophosphate to an asparagine residue within an Asn-X-Ser/Thr consensus motif in nascent polypeptide chains, the first step in protein N-glycosylation. N-glycosylation occurs cotranslationally and the complex associates with the Sec61 complex at the channel-forming translocon complex that mediates protein translocation across the endoplasmic reticulum (ER). All subunits are required for a maximal enzyme activity. The chain is Dolichyl-diphosphooligosaccharide--protein glycosyltransferase subunit DAD2 (DAD2) from Arabidopsis thaliana (Mouse-ear cress).